We begin with the raw amino-acid sequence, 345 residues long: Anthranilate phosphoribosyltransferase (345 aa).

Residues 77 to 79 (TAG), 82 to 83 (GD), Thr-87, 89 to 92 (NVST), 106 to 114 (KHGNRAVSG), and Ser-118 each bind 5-phospho-alpha-D-ribose 1-diphosphate. Position 79 (Gly-79) interacts with anthranilate. Ser-91 is a binding site for Mg(2+). An anthranilate-binding site is contributed by Asn-109. Arg-164 is a binding site for anthranilate. Asp-223 and Glu-224 together coordinate Mg(2+).

The protein belongs to the anthranilate phosphoribosyltransferase family. As to quaternary structure, homodimer. Requires Mg(2+) as cofactor.

The enzyme catalyses N-(5-phospho-beta-D-ribosyl)anthranilate + diphosphate = 5-phospho-alpha-D-ribose 1-diphosphate + anthranilate. It participates in amino-acid biosynthesis; L-tryptophan biosynthesis; L-tryptophan from chorismate: step 2/5. Its function is as follows. Catalyzes the transfer of the phosphoribosyl group of 5-phosphorylribose-1-pyrophosphate (PRPP) to anthranilate to yield N-(5'-phosphoribosyl)-anthranilate (PRA). The sequence is that of Anthranilate phosphoribosyltransferase from Saccharolobus solfataricus (strain ATCC 35092 / DSM 1617 / JCM 11322 / P2) (Sulfolobus solfataricus).